Reading from the N-terminus, the 302-residue chain is Glycine--tRNA ligase alpha subunit (302 aa).

Belongs to the class-II aminoacyl-tRNA synthetase family. Tetramer of two alpha and two beta subunits.

The protein localises to the cytoplasm. The catalysed reaction is tRNA(Gly) + glycine + ATP = glycyl-tRNA(Gly) + AMP + diphosphate. This is Glycine--tRNA ligase alpha subunit from Xanthomonas oryzae pv. oryzae (strain PXO99A).